Here is a 163-residue protein sequence, read N- to C-terminus: MLKRSLLFLTVLLLLFSFSSITNEVSASSSFDKGKYKKGDDASYFEPTGPYLMVNVTGVDGKGNELLSPHYVEFPIKPGTTLTKEKIEYYVEWALDATAYKEFRVVELDPSAKIEVTYYDKNKKKEETKSFPITEKGFVVPDLSEHIKNPGFNLITKVVIEKK.

An N-terminal signal peptide occupies residues 1–27 (MLKRSLLFLTVLLLLFSFSSITNEVSA).

It belongs to the staphylokinase family.

It is found in the secreted. Potent plasminogen activator that converts plasminogen into plasmin. It forms a 1:1 complex with plasmin, which in turn activates other plasminogen molecules. In Staphylococcus phage S phi-C (Bacteriophage S phi-C), this protein is Staphylokinase.